A 289-amino-acid polypeptide reads, in one-letter code: SAGA-associated factor 29kDa (289 aa).

Residues 9-36 (AQQIQDRLKDIQQNIHNVDEERRRAENS) are a coiled coil. The 142-residue stretch at 137 to 278 (GNYVAKVGDN…VIAYRPTKKG (142 aa)) folds into the SGF29 C-terminal domain. Histone H3K4me3 N-terminus binding regions lie at residues 179–181 (DID) and 225–228 (QTTC). A histone H3K4me3 binding region spans residues 249-251 (FED).

The protein belongs to the SGF29 family. As to quaternary structure, component of the Spt-Ada-Gcn5 acetyltransferase (SAGA) complex consisting of wda/Taf5L, Saf6, Taf9, Taf10b, Taf12, Ada1, Spt3, Spt7, Spt20, Sf3b3, Sf3b5, Nipped-A/Tra1, a histone acetyltransferase (HAT) module made up of Gcn5, Ada2b (Isoform B), Ada3 and Sgf29, and a deubiquitinase (DUB) module made up of not/nonstop, Sgf11, Atxn7 and e(y)2. Component of the Chiffon histone acetyltransferase (CHAT) complex consisting of Ada3, Sgf29, Gcn5, chif/chiffon and Ada2b (Isoform A).

It localises to the nucleus. Component of both the SAGA and CHAT histone acetyltransferase complexes, which both predominantly acetylate histone H3. In Drosophila melanogaster (Fruit fly), this protein is SAGA-associated factor 29kDa.